Here is a 313-residue protein sequence, read N- to C-terminus: Olfactory receptor 4M1 (313 aa).

Residues 1 to 25 are Extracellular-facing; the sequence is MEPANDTTVTEFILTGLSQTREVQL. An N-linked (GlcNAc...) asparagine glycan is attached at asparagine 5. The chain crosses the membrane as a helical span at residues 26 to 46; that stretch reads VLFVIFLSFYLFILPVNILII. Residues 47–57 are Cytoplasmic-facing; sequence CTIRLDSHLSS. A helical membrane pass occupies residues 58 to 78; it reads PMYFLLANLAFLDIWYSSITA. The Extracellular portion of the chain corresponds to 79-97; it reads PKMLVDFFVERKIISFGGC. A disulfide bridge links cysteine 97 with cysteine 179. The chain crosses the membrane as a helical span at residues 98-118; it reads IAQLFFLHFVGASEMFLLTVM. Residues 119-142 lie on the Cytoplasmic side of the membrane; sequence AFDRYAAICRPLHYATIMNRRLCC. The chain crosses the membrane as a helical span at residues 143 to 163; it reads ILVALSWTGGFVHSIIQVALI. The Extracellular portion of the chain corresponds to 164-204; it reads VRLPFCGPNELDNYFCDITQVVRIACANTFLEEMVMIFSSG. The helical transmembrane segment at 205–225 threads the bilayer; the sequence is LISVVCFIALLMSYAFLLTML. The Cytoplasmic portion of the chain corresponds to 226-238; that stretch reads KKHSSSGESTSRA. A helical transmembrane segment spans residues 239–259; sequence ISTCYSHITIVVLMFGPSIYI. At 260–270 the chain is on the extracellular side; it reads YARPFDSFSLD. Residues 271–291 traverse the membrane as a helical segment; it reads KVVSVFHTVIFPLLNPIIYTL. Topologically, residues 292–313 are cytoplasmic; that stretch reads RNKEVKAAMRKLVNRYIFCKEK.

Belongs to the G-protein coupled receptor 1 family. As to expression, highly expressed in liver but not in adipose tissue. Also expressed at high level in testis.

The protein localises to the cell membrane. Olfactory receptor that acts as a receptor of Asprosin hormone at the surface of hepatocytes to promote hepatocyte glucose release. Also binds Asprosin in the arcuate nucleus of the hypothalamus, thereby stimulating appetite by promoting orexigenic AgRP neuronal activity. In testis, Asprosin-binding promotes sperm progressive motility and enhances male fertility. The activity of this receptor is mediated by G proteins which activate adenylyl cyclase, resulting in an elevation of intracellular cAMP. The protein is Olfactory receptor 4M1 of Mus musculus (Mouse).